We begin with the raw amino-acid sequence, 278 residues long: Tryptophan synthase alpha chain (278 aa).

Catalysis depends on proton acceptor residues glutamate 50 and aspartate 61.

This sequence belongs to the TrpA family. As to quaternary structure, tetramer of two alpha and two beta chains.

The enzyme catalyses (1S,2R)-1-C-(indol-3-yl)glycerol 3-phosphate + L-serine = D-glyceraldehyde 3-phosphate + L-tryptophan + H2O. The protein operates within amino-acid biosynthesis; L-tryptophan biosynthesis; L-tryptophan from chorismate: step 5/5. Its function is as follows. The alpha subunit is responsible for the aldol cleavage of indoleglycerol phosphate to indole and glyceraldehyde 3-phosphate. This chain is Tryptophan synthase alpha chain, found in Rhodopseudomonas palustris (strain BisB5).